The primary structure comprises 743 residues: NAD(P)H-quinone oxidoreductase subunit 5, chloroplastic (743 aa).

16 consecutive transmembrane segments (helical) span residues 9–29 (WIIP…LLFF), 40–60 (WAFI…DLSI), 89–109 (IDPL…LVLI), 125–145 (FAYM…SNFI), 147–167 (IYIF…FWFT), 185–205 (GDFG…SFEF), 219–239 (NEVN…GPVA), 258–278 (TPIS…FLVA), 280–300 (LLPL…IGII), 327–347 (LGYM…FHLI), 354–374 (ALLF…VGYF), 396–416 (TAFL…CFWS), 425–445 (WLYS…TAFY), 546–566 (ILFV…IGIP), 607–627 (LSVS…KPFY), and 721–741 (FYLL…FFFF).

It belongs to the complex I subunit 5 family. NDH is composed of at least 16 different subunits, 5 of which are encoded in the nucleus.

The protein resides in the plastid. The protein localises to the chloroplast thylakoid membrane. The enzyme catalyses a plastoquinone + NADH + (n+1) H(+)(in) = a plastoquinol + NAD(+) + n H(+)(out). It catalyses the reaction a plastoquinone + NADPH + (n+1) H(+)(in) = a plastoquinol + NADP(+) + n H(+)(out). In terms of biological role, NDH shuttles electrons from NAD(P)H:plastoquinone, via FMN and iron-sulfur (Fe-S) centers, to quinones in the photosynthetic chain and possibly in a chloroplast respiratory chain. The immediate electron acceptor for the enzyme in this species is believed to be plastoquinone. Couples the redox reaction to proton translocation, and thus conserves the redox energy in a proton gradient. This Citrus sinensis (Sweet orange) protein is NAD(P)H-quinone oxidoreductase subunit 5, chloroplastic (ndhF).